Here is a 248-residue protein sequence, read N- to C-terminus: 14-3-3 protein sigma (248 aa).

3 positions are modified to phosphoserine: Ser5, Ser74, and Ser248.

The protein belongs to the 14-3-3 family. Homodimer. Interacts with KRT17 and SAMSN1. Found in a complex with XPO7, EIF4A1, ARHGAP1, VPS26A, VPS29 and VPS35. Interacts with GAB2. Interacts with SRPK2. Interacts with COPS6. Interacts with COP1; this interaction leads to proteasomal degradation. Interacts with the 'Thr-369' phosphorylated form of DAPK2. Interacts with PI4KB. Interacts with SLITRK1. Interacts with LRRK2; this interaction is dependent on LRRK2 phosphorylation. Interacts with PKP3 (via N-terminus); the interaction maintains the cytoplasmic pool of PKP3, facilitates PKP3 exchange at desmosomes and restricts PKP3 localization to existing desmosome cell junctions. Interacts with LCP2. Post-translationally, ubiquitinated. Ubiquitination by RFFL induces proteasomal degradation and indirectly regulates p53/TP53 activation. As to expression, present mainly in tissues enriched in stratified squamous keratinizing epithelium.

The protein localises to the cytoplasm. It localises to the nucleus. The protein resides in the secreted. Its function is as follows. Adapter protein implicated in the regulation of a large spectrum of both general and specialized signaling pathways. Binds to a large number of partners, usually by recognition of a phosphoserine or phosphothreonine motif. Binding generally results in the modulation of the activity of the binding partner. Promotes cytosolic retention of GBP1 GTPase by binding to phosphorylated GBP1, thereby inhibiting the innate immune response. Also acts as a TP53/p53-regulated inhibitor of G2/M progression. When bound to KRT17, regulates protein synthesis and epithelial cell growth by stimulating Akt/mTOR pathway. Acts to maintain desmosome cell junction adhesion in epithelial cells via interacting with and sequestering PKP3 to the cytoplasm, thereby restricting its translocation to existing desmosome structures and therefore maintaining desmosome protein homeostasis. Also acts to facilitate PKP3 exchange at desmosome plaques, thereby maintaining keratinocyte intercellular adhesion. May also regulate MDM2 autoubiquitination and degradation and thereby activate p53/TP53. This Homo sapiens (Human) protein is 14-3-3 protein sigma (SFN).